Consider the following 150-residue polypeptide: 3-dehydroquinate dehydratase (150 aa).

Y26 serves as the catalytic Proton acceptor. Substrate contacts are provided by N77, H83, and D90. H103 functions as the Proton donor in the catalytic mechanism. Residues 104–105 and R114 each bind substrate; that span reads LS.

This sequence belongs to the type-II 3-dehydroquinase family. In terms of assembly, homododecamer.

It catalyses the reaction 3-dehydroquinate = 3-dehydroshikimate + H2O. It functions in the pathway metabolic intermediate biosynthesis; chorismate biosynthesis; chorismate from D-erythrose 4-phosphate and phosphoenolpyruvate: step 3/7. Catalyzes a trans-dehydration via an enolate intermediate. The polypeptide is 3-dehydroquinate dehydratase (Photobacterium profundum (strain SS9)).